Here is a 342-residue protein sequence, read N- to C-terminus: S-adenosylmethionine:tRNA ribosyltransferase-isomerase (342 aa).

This sequence belongs to the QueA family. In terms of assembly, monomer.

The protein localises to the cytoplasm. The enzyme catalyses 7-aminomethyl-7-carbaguanosine(34) in tRNA + S-adenosyl-L-methionine = epoxyqueuosine(34) in tRNA + adenine + L-methionine + 2 H(+). The protein operates within tRNA modification; tRNA-queuosine biosynthesis. Transfers and isomerizes the ribose moiety from AdoMet to the 7-aminomethyl group of 7-deazaguanine (preQ1-tRNA) to give epoxyqueuosine (oQ-tRNA). This chain is S-adenosylmethionine:tRNA ribosyltransferase-isomerase, found in Streptococcus mutans serotype c (strain ATCC 700610 / UA159).